Reading from the N-terminus, the 226-residue chain is 7-cyano-7-deazaguanine synthase (226 aa).

Residue 10–20 (LSGGLDSATAA) coordinates ATP. Zn(2+)-binding residues include cysteine 191, cysteine 199, cysteine 202, and cysteine 205.

This sequence belongs to the QueC family. The cofactor is Zn(2+).

It catalyses the reaction 7-carboxy-7-deazaguanine + NH4(+) + ATP = 7-cyano-7-deazaguanine + ADP + phosphate + H2O + H(+). The protein operates within purine metabolism; 7-cyano-7-deazaguanine biosynthesis. Its function is as follows. Catalyzes the ATP-dependent conversion of 7-carboxy-7-deazaguanine (CDG) to 7-cyano-7-deazaguanine (preQ(0)). This chain is 7-cyano-7-deazaguanine synthase, found in Prochlorococcus marinus (strain MIT 9303).